The following is a 410-amino-acid chain: Protein LTV1 homolog (410 aa).

Disordered stretches follow at residues 142 to 165 (VYRS…DEMY) and 325 to 378 (EMDI…ARKL). 2 stretches are compositionally biased toward acidic residues: residues 151–165 (DSEE…DEMY) and 325–345 (EMDI…DDDK). The segment covering 357–366 (PKNETPEQRS) has biased composition (basic and acidic residues). Residues 363–389 (EQRSLRKKAVKEARKLRRVEKKANKTM) adopt a coiled-coil conformation. Positions 367–378 (LRKKAVKEARKL) are enriched in basic residues.

Belongs to the LTV1 family.

The polypeptide is Protein LTV1 homolog (Caenorhabditis elegans).